Consider the following 85-residue polypeptide: Phycobilisome 9.7 kDa linker polypeptide, phycocyanin-associated, rod (85 aa).

The 59-residue stretch at 16-74 (NRVFVYEVEGLRQNEQTDNNRYQIRNSSTIEIQVPYSRMNEEDRRITRLGGRIVNIRPA) folds into the CpcD-like domain.

Belongs to the phycobilisome linker protein family.

Its subcellular location is the cellular thylakoid membrane. Functionally, rod linker protein, associated with phycocyanin. Linker polypeptides determine the state of aggregation and the location of the disk-shaped phycobiliprotein units within the phycobilisome and modulate their spectroscopic properties in order to mediate a directed and optimal energy transfer. The sequence is that of Phycobilisome 9.7 kDa linker polypeptide, phycocyanin-associated, rod (cpcD2) from Microchaete diplosiphon (Fremyella diplosiphon).